We begin with the raw amino-acid sequence, 232 residues long: Ribonuclease 3 (232 aa).

The 130-residue stretch at 7-136 (AALLEDTIDY…LLGAVFCDGG (130 aa)) folds into the RNase III domain. Glutamate 49 is a Mg(2+) binding site. Residue aspartate 53 is part of the active site. Residues asparagine 122 and glutamate 125 each coordinate Mg(2+). Glutamate 125 is a catalytic residue. The DRBM domain maps to 163–232 (DYKTRLQERL…AKQALEYLEE (70 aa)).

Belongs to the ribonuclease III family. Homodimer. Mg(2+) serves as cofactor.

It is found in the cytoplasm. The enzyme catalyses Endonucleolytic cleavage to 5'-phosphomonoester.. Functionally, digests double-stranded RNA. Involved in the processing of primary rRNA transcript to yield the immediate precursors to the large and small rRNAs (23S and 16S). Processes some mRNAs, and tRNAs when they are encoded in the rRNA operon. Processes pre-crRNA and tracrRNA of type II CRISPR loci if present in the organism. In Syntrophotalea carbinolica (strain DSM 2380 / NBRC 103641 / GraBd1) (Pelobacter carbinolicus), this protein is Ribonuclease 3.